Consider the following 759-residue polypeptide: Olfactomedin-like protein 2B (759 aa).

The signal sequence occupies residues 1–20 (MAKSLLLVLCFALVTTLGWG). Coiled-coil stretches lie at residues 40-68 (TEDE…KVKA) and 179-209 (KLEE…MNKR). Asparagine 187 and asparagine 213 each carry an N-linked (GlcNAc...) asparagine glycan. Disordered stretches follow at residues 346 to 396 (TRRP…VSAS) and 456 to 494 (THTA…EEED). Over residues 356–396 (AAVTADAGTTSAGTPTTALPSARLPASTAAPSTPDPAVSAS) the composition is skewed to low complexity. One can recognise an Olfactomedin-like domain in the interval 502–759 (RCKDTLSTIT…QVTYHVIFAY (258 aa)). The cysteines at positions 503 and 689 are disulfide-linked. The N-linked (GlcNAc...) asparagine glycan is linked to asparagine 704.

In terms of assembly, homodimer. Binds to heparin and chondroitin sulfate E. Post-translationally, O-glycosylated and N-glycosylated.

The protein resides in the secreted. The sequence is that of Olfactomedin-like protein 2B (OLFML2B) from Bos taurus (Bovine).